The sequence spans 127 residues: Small ribosomal subunit protein bS6 (127 aa).

Positions 99–127 (PLPAPRVVPGSEPAAAPQEQPAANSEAAS) are disordered. Residues 109 to 127 (SEPAAAPQEQPAANSEAAS) show a composition bias toward low complexity.

Belongs to the bacterial ribosomal protein bS6 family.

Functionally, binds together with bS18 to 16S ribosomal RNA. The sequence is that of Small ribosomal subunit protein bS6 from Parasynechococcus marenigrum (strain WH8102).